We begin with the raw amino-acid sequence, 72 residues long: Large ribosomal subunit protein uL29 (72 aa).

Belongs to the universal ribosomal protein uL29 family.

This is Large ribosomal subunit protein uL29 from Chlamydia trachomatis serovar L2 (strain ATCC VR-902B / DSM 19102 / 434/Bu).